The chain runs to 194 residues: Peptidyl-tRNA hydrolase (194 aa).

The active-site Proton acceptor is the histidine 22. Residues tyrosine 67, asparagine 69, and asparagine 115 each contribute to the tRNA site.

Belongs to the PTH family. As to quaternary structure, monomer.

Its subcellular location is the cytoplasm. The catalysed reaction is an N-acyl-L-alpha-aminoacyl-tRNA + H2O = an N-acyl-L-amino acid + a tRNA + H(+). Hydrolyzes ribosome-free peptidyl-tRNAs (with 1 or more amino acids incorporated), which drop off the ribosome during protein synthesis, or as a result of ribosome stalling. Functionally, catalyzes the release of premature peptidyl moieties from peptidyl-tRNA molecules trapped in stalled 50S ribosomal subunits, and thus maintains levels of free tRNAs and 50S ribosomes. The protein is Peptidyl-tRNA hydrolase of Granulibacter bethesdensis (strain ATCC BAA-1260 / CGDNIH1).